The primary structure comprises 204 residues: Large ribosomal subunit protein uL4 (204 aa).

The interval 49–75 (TKGRSDVSGGGKKPWRQKGRGGARAGS) is disordered.

This sequence belongs to the universal ribosomal protein uL4 family. Part of the 50S ribosomal subunit.

Functionally, one of the primary rRNA binding proteins, this protein initially binds near the 5'-end of the 23S rRNA. It is important during the early stages of 50S assembly. It makes multiple contacts with different domains of the 23S rRNA in the assembled 50S subunit and ribosome. Its function is as follows. Forms part of the polypeptide exit tunnel. This Campylobacter jejuni subsp. doylei (strain ATCC BAA-1458 / RM4099 / 269.97) protein is Large ribosomal subunit protein uL4.